The chain runs to 322 residues: Tetraacyldisaccharide 4'-kinase (322 aa).

54 to 61 (SVGGTGKT) serves as a coordination point for ATP.

It belongs to the LpxK family.

The catalysed reaction is a lipid A disaccharide + ATP = a lipid IVA + ADP + H(+). It functions in the pathway glycolipid biosynthesis; lipid IV(A) biosynthesis; lipid IV(A) from (3R)-3-hydroxytetradecanoyl-[acyl-carrier-protein] and UDP-N-acetyl-alpha-D-glucosamine: step 6/6. Its function is as follows. Transfers the gamma-phosphate of ATP to the 4'-position of a tetraacyldisaccharide 1-phosphate intermediate (termed DS-1-P) to form tetraacyldisaccharide 1,4'-bis-phosphate (lipid IVA). This Francisella tularensis subsp. tularensis (strain FSC 198) protein is Tetraacyldisaccharide 4'-kinase.